The sequence spans 242 residues: Protein MHF1 homolog (242 aa).

The interval Leu208–Leu242 is disordered. Over residues Ser231–Leu242 the composition is skewed to polar residues.

This sequence belongs to the TAF9 family. CENP-S/MHF1 subfamily.

The protein localises to the nucleus. In terms of biological role, involved in the promotion of spontaneous somatic homologous recombination (HR) events, which is opposite to the function of FANCM in ordered HR. Only FANCM is essential for replicative repair in the absence of the endonuclease MUS81. Acts in the same pathway as FANCM to restrain class II meiotic crossing over (CO), and acts with FANCM during meiosis to repair interstrand cross-links (ICLs). This common pathway between MHF1 and FANCM is in parallel to the pathway that involves the RECQ4A helicase. The sequence is that of Protein MHF1 homolog from Arabidopsis thaliana (Mouse-ear cress).